A 278-amino-acid chain; its full sequence is Autotransporter adhesin BtaF (278 aa).

The first 29 residues, Met-1 to Ala-29, serve as a signal peptide directing secretion. Residues Pro-30 to Ala-182 are surface exposed passenger domain. Residues Leu-186–Gly-224 are outer membrane translocation of the passenger domain. The translocator domain stretch occupies residues Lys-225–Asn-278.

Belongs to the autotransporter-2 (AT-2) (TC 1.B.40) family. Homotrimer.

It is found in the cell surface. The protein resides in the cell outer membrane. Its function is as follows. Participates in bacterial attachment to several surfaces, including various extracellular matrix (ECM) components and a hydrophobic abiotic surface. Involved in adhesion to host epithelial cells and is required for full virulence in mice. Also implicated in the resistance to porcine serum. The protein is Autotransporter adhesin BtaF of Brucella suis biovar 1 (strain 1330).